We begin with the raw amino-acid sequence, 336 residues long: 7,8-didemethyl-8-hydroxy-5-deazariboflavin synthase (336 aa).

Residues 18-249 (ITYSPAYTLV…TSIAIQVPPN (232 aa)) form the Radical SAM core domain. Residues C32, C36, and C39 each contribute to the [4Fe-4S] cluster site.

Belongs to the radical SAM superfamily. CofG family. Consists of two subunits, CofG and CofH. It depends on [4Fe-4S] cluster as a cofactor.

It catalyses the reaction 5-amino-5-(4-hydroxybenzyl)-6-(D-ribitylimino)-5,6-dihydrouracil + S-adenosyl-L-methionine = 7,8-didemethyl-8-hydroxy-5-deazariboflavin + 5'-deoxyadenosine + L-methionine + NH4(+) + H(+). It participates in cofactor biosynthesis; coenzyme F0 biosynthesis. In terms of biological role, catalyzes the radical-mediated synthesis of 7,8-didemethyl-8-hydroxy-5-deazariboflavin from 5-amino-5-(4-hydroxybenzyl)-6-(D-ribitylimino)-5,6-dihydrouracil. This Synechococcus elongatus (strain ATCC 33912 / PCC 7942 / FACHB-805) (Anacystis nidulans R2) protein is 7,8-didemethyl-8-hydroxy-5-deazariboflavin synthase.